We begin with the raw amino-acid sequence, 1057 residues long: Carbamoyl phosphate synthase large chain (1057 aa).

A carboxyphosphate synthetic domain region spans residues 1-401 (MPKNKDINTI…SLLKAIRSLE (401 aa)). Residues R129, R169, G175, G176, K208, I210, E215, G241, I242, H243, Q284, and E298 each contribute to the ATP site. The 195-residue stretch at 133-327 (RSLMNELDVP…IAKLAAKIAV (195 aa)) folds into the ATP-grasp 1 domain. The Mg(2+) site is built by Q284, E298, and N300. The Mn(2+) site is built by Q284, E298, and N300. The oligomerization domain stretch occupies residues 402 to 546 (YGVHHLGLPN…YGTYERDNES (145 aa)). Residues 547–929 (VVTDKEKVIV…ALFKGLTASG (383 aa)) form a carbamoyl phosphate synthetic domain region. An ATP-grasp 2 domain is found at 671 to 861 (EALLNKIDVP…MAQLAMRAIL (191 aa)). Residues R707, R746, L748, E752, G777, V778, H779, S780, Q820, and E832 each contribute to the ATP site. The Mg(2+) site is built by Q820, E832, and N834. Mn(2+) is bound by residues Q820, E832, and N834. Positions 930–1057 (VEVKDHGTVL…ESMSFTMKQM (128 aa)) constitute an MGS-like domain. The tract at residues 930–1057 (VEVKDHGTVL…ESMSFTMKQM (128 aa)) is allosteric domain.

The protein belongs to the CarB family. As to quaternary structure, composed of two chains; the small (or glutamine) chain promotes the hydrolysis of glutamine to ammonia, which is used by the large (or ammonia) chain to synthesize carbamoyl phosphate. Tetramer of heterodimers (alpha,beta)4. Mg(2+) is required as a cofactor. The cofactor is Mn(2+).

It catalyses the reaction hydrogencarbonate + L-glutamine + 2 ATP + H2O = carbamoyl phosphate + L-glutamate + 2 ADP + phosphate + 2 H(+). It carries out the reaction hydrogencarbonate + NH4(+) + 2 ATP = carbamoyl phosphate + 2 ADP + phosphate + 2 H(+). The protein operates within amino-acid biosynthesis; L-arginine biosynthesis; carbamoyl phosphate from bicarbonate: step 1/1. It functions in the pathway pyrimidine metabolism; UMP biosynthesis via de novo pathway; (S)-dihydroorotate from bicarbonate: step 1/3. Large subunit of the glutamine-dependent carbamoyl phosphate synthetase (CPSase). CPSase catalyzes the formation of carbamoyl phosphate from the ammonia moiety of glutamine, carbonate, and phosphate donated by ATP, constituting the first step of 2 biosynthetic pathways, one leading to arginine and/or urea and the other to pyrimidine nucleotides. The large subunit (synthetase) binds the substrates ammonia (free or transferred from glutamine from the small subunit), hydrogencarbonate and ATP and carries out an ATP-coupled ligase reaction, activating hydrogencarbonate by forming carboxy phosphate which reacts with ammonia to form carbamoyl phosphate. The polypeptide is Carbamoyl phosphate synthase large chain (Staphylococcus carnosus (strain TM300)).